The sequence spans 372 residues: DNA replication and repair protein RecF (372 aa).

Position 30–37 (30–37 (GENAQGKT)) interacts with ATP.

It belongs to the RecF family.

The protein resides in the cytoplasm. Its function is as follows. The RecF protein is involved in DNA metabolism; it is required for DNA replication and normal SOS inducibility. RecF binds preferentially to single-stranded, linear DNA. It also seems to bind ATP. This Exiguobacterium sp. (strain ATCC BAA-1283 / AT1b) protein is DNA replication and repair protein RecF.